The sequence spans 310 residues: Glycine--tRNA ligase alpha subunit (310 aa).

This sequence belongs to the class-II aminoacyl-tRNA synthetase family. Tetramer of two alpha and two beta subunits.

Its subcellular location is the cytoplasm. It carries out the reaction tRNA(Gly) + glycine + ATP = glycyl-tRNA(Gly) + AMP + diphosphate. The sequence is that of Glycine--tRNA ligase alpha subunit from Agrobacterium fabrum (strain C58 / ATCC 33970) (Agrobacterium tumefaciens (strain C58)).